A 37-amino-acid polypeptide reads, in one-letter code: MVEPLLSGIVLGLIPITLAGLFVTAYLQYRRGDQLNL.

A helical membrane pass occupies residues 5 to 25 (LLSGIVLGLIPITLAGLFVTA).

Belongs to the PetG family. In terms of assembly, the 4 large subunits of the cytochrome b6-f complex are cytochrome b6, subunit IV (17 kDa polypeptide, PetD), cytochrome f and the Rieske protein, while the 4 small subunits are PetG, PetL, PetM and PetN. The complex functions as a dimer.

It is found in the plastid. It localises to the chloroplast thylakoid membrane. Functionally, component of the cytochrome b6-f complex, which mediates electron transfer between photosystem II (PSII) and photosystem I (PSI), cyclic electron flow around PSI, and state transitions. PetG is required for either the stability or assembly of the cytochrome b6-f complex. This chain is Cytochrome b6-f complex subunit 5, found in Chara vulgaris (Common stonewort).